The sequence spans 282 residues: Cyclic AMP-dependent transcription factor ATF-5 (282 aa).

The segment at 1 to 21 (MSLLATLGLELDRALLPASGL) is required for protein stabilization induced by IL1B. N6-acetyllysine; by EP300 is present on Lys29. Disordered regions lie at residues 116–152 (FLDA…DLPQ) and 173–238 (EEVG…ALEG). The interval 119 to 217 (APPLPPPSPP…GDRKQKKRDQ (99 aa)) is interaction with PTP4A1. Residues 120–140 (PPLPPPSPPPLPPPPLPPAPS) show a composition bias toward pro residues. Low complexity predominate over residues 141–150 (LPLSLPSFDL). A compositionally biased stretch (pro residues) spans 178–194 (PPLPPPQQPPPPSPPQP). A bZIP domain is found at 208 to 271 (GDRKQKKRDQ…QYVKDLLIEV (64 aa)). Residues 210 to 230 (RKQKKRDQNKSAALRYRQRKR) form a basic motif region. Residues 236–250 (LEGECQGLEARNREL) are leucine-zipper. Ser256 is modified (phosphoserine).

Belongs to the bZIP family. Binds DNA as a dimer. Interacts with PTP4A1/PRL-1. Interacts with CCND3, but not with CCND1 or CCND2. Interacts with HSPA1A or HSPA1B; the interaction protects ATF5 from degradation via proteasome-dependent and caspase-dependent processes. Interacts (via C-terminal region) with NPM1 (via C-terminal region); the interaction leads to loss of association between HSPA1A or HSPA1B and ATF5 and promotes ATF5 degradation via proteasome-dependent and caspase-dependent processes. Interacts with NLK; the interaction stabilizes ATF5 at the protein level in a kinase-independent manner. Interacts with alpha-tubulin, gamma-tubulin members TUBGCP2 and TUBGCP4, PCNT; the ATF5:PCNT:polyglutamylated tubulin (PGT) tripartite unites the mother centriole and the pericentriolar material (PCM) in the centrosome. Interacts with CEBPB and EP300; EP300 is required for ATF5 and CEBPB interaction and DNA binding. Post-translationally, ubiquitinated by CDC34 and UBE2B in order to be degraded by the proteasome. Cisplatin inhibits ubiquitination and proteasome-mediated degradation by inhibiting the interaction with CDC34. Ubiquitination and degradation by the proteasome are inhibited by NLK in a kinase-independent manner. Phosphorylated by NLK, probably at Ser-92, Thr-94, Ser-126 and Ser-190. In terms of processing, acetylated at Lys-29 by EP300, the acetylation enhances the interaction with CEBPB, DNA-binding and transactivation activity. As to expression, widely expressed with higher expression levels in liver.

It is found in the cytoplasm. Its subcellular location is the nucleus. The protein localises to the cytoskeleton. The protein resides in the microtubule organizing center. It localises to the centrosome. Transcription factor that either stimulates or represses gene transcription through binding of different DNA regulatory elements such as cAMP response element (CRE) (consensus: 5'-GTGACGT[AC][AG]-3'), ATF5-specific response element (ARE) (consensus: 5'-C[CT]TCT[CT]CCTT[AT]-3') but also the amino acid response element (AARE), present in many viral and cellular promoters. Critically involved, often in a cell type-dependent manner, in cell survival, proliferation, and differentiation. Its transcriptional activity is enhanced by CCND3 and slightly inhibited by CDK4. Important regulator of the cerebral cortex formation, functions in cerebral cortical neuroprogenitor cells to maintain proliferation and to block differentiation into neurons. Must be down-regulated in order for such cells to exit the cycle and differentiate. Participates in the pathways by which SHH promotes cerebellar granule neuron progenitor cells proliferation. Critical for survival of mature olfactory sensory neurons (OSN), directs expression of OSN-specific genes. May be involved in osteogenic differentiation. Promotes cell proliferation and survival by inducing the expression of EGR1 sinergistically with ELK1. Once acetylated by EP300, binds to ARE sequences on target genes promoters, such as BCL2 and EGR1. Plays an anti-apoptotic role through the transcriptional regulation of BCL2, this function seems to be cell type-dependent. Cooperates with NR1I3/CAR in the transcriptional activation of CYP2B6 in liver. In hepatic cells, represses CRE-dependent transcription and inhibits proliferation by blocking at G2/M phase. May act as a negative regulator of IL1B transduction pathway in liver. Upon IL1B stimulus, cooperates with NLK to activate the transactivation activity of C/EBP subfamily members. Besides its function of transcription factor, acts as a cofactor of CEBPB to activate CEBPA and promote adipocyte differentiation. Regulates centrosome dynamics in a cell-cycle- and centriole-age-dependent manner. Forms 9-foci symmetrical ring scaffold around the mother centriole to control centrosome function and the interaction between centrioles and pericentriolar material. This chain is Cyclic AMP-dependent transcription factor ATF-5 (ATF5), found in Homo sapiens (Human).